Reading from the N-terminus, the 151-residue chain is UPF0178 protein YaiI (151 aa).

This sequence belongs to the UPF0178 family.

The protein is UPF0178 protein YaiI of Salmonella agona (strain SL483).